A 240-amino-acid chain; its full sequence is Probable ATP synthase 24 kDa subunit, mitochondrial (240 aa).

A mitochondrion-targeting transit peptide spans 1–32; sequence MAYASRFLSRSKQLQGGLVILQQQHAIPVRAF. Composition is skewed to basic and acidic residues over residues 210–222 and 229–240; these read AVEAMESQKKKEE and PDVKSLDIRNFI. The interval 210 to 240 is disordered; it reads AVEAMESQKKKEEFQDEEMPDVKSLDIRNFI.

It localises to the mitochondrion. The protein localises to the mitochondrion inner membrane. Functionally, mitochondrial membrane ATP synthase (F(1)F(0) ATP synthase or Complex V) produces ATP from ADP in the presence of a proton gradient across the membrane which is generated by electron transport complexes of the respiratory chain. F-type ATPases consist of two structural domains, F(1) - containing the extramembraneous catalytic core and F(0) - containing the membrane proton channel, linked together by a central stalk and a peripheral stalk. During catalysis, ATP synthesis in the catalytic domain of F(1) is coupled via a rotary mechanism of the central stalk subunits to proton translocation. Part of the complex F(0) domain. The polypeptide is Probable ATP synthase 24 kDa subunit, mitochondrial (Arabidopsis thaliana (Mouse-ear cress)).